Consider the following 245-residue polypeptide: Eukaryotic translation initiation factor 6 (245 aa).

The protein belongs to the eIF-6 family. In terms of assembly, monomer. Associates with the 60S ribosomal subunit.

The protein resides in the cytoplasm. It localises to the nucleus. Its subcellular location is the nucleolus. In terms of biological role, binds to the 60S ribosomal subunit and prevents its association with the 40S ribosomal subunit to form the 80S initiation complex in the cytoplasm. May also be involved in ribosome biogenesis. The polypeptide is Eukaryotic translation initiation factor 6 (Ostreococcus lucimarinus (strain CCE9901)).